We begin with the raw amino-acid sequence, 356 residues long: Cyanide hydratase (356 aa).

The 280-residue stretch at tyrosine 6–leucine 285 folds into the CN hydrolase domain. The active-site Proton acceptor is glutamate 46. Lysine 128 is a catalytic residue. The active-site Nucleophile is the cysteine 163.

Belongs to the carbon-nitrogen hydrolase superfamily. Nitrilase family. In terms of assembly, oligomer of dimers, forming left-handed helical fibers.

The enzyme catalyses formamide = hydrogen cyanide + H2O. Catalyzes the hydration of cyanide to formamide. Degradation of cyanide may be important for plant pathogenic fungi in infection of cyanogenic plants. The chain is Cyanide hydratase from Leptosphaeria maculans (Blackleg fungus).